The sequence spans 370 residues: UDP-N-acetylglucosamine--N-acetylmuramyl-(pentapeptide) pyrophosphoryl-undecaprenol N-acetylglucosamine transferase (370 aa).

UDP-N-acetyl-alpha-D-glucosamine contacts are provided by residues 10 to 12, Asn-126, Ser-200, Ile-255, and Gln-300; that span reads TGG.

The protein belongs to the glycosyltransferase 28 family. MurG subfamily.

Its subcellular location is the cell membrane. It catalyses the reaction Mur2Ac(oyl-L-Ala-gamma-D-Glu-L-Lys-D-Ala-D-Ala)-di-trans,octa-cis-undecaprenyl diphosphate + UDP-N-acetyl-alpha-D-glucosamine = beta-D-GlcNAc-(1-&gt;4)-Mur2Ac(oyl-L-Ala-gamma-D-Glu-L-Lys-D-Ala-D-Ala)-di-trans,octa-cis-undecaprenyl diphosphate + UDP + H(+). The protein operates within cell wall biogenesis; peptidoglycan biosynthesis. In terms of biological role, cell wall formation. Catalyzes the transfer of a GlcNAc subunit on undecaprenyl-pyrophosphoryl-MurNAc-pentapeptide (lipid intermediate I) to form undecaprenyl-pyrophosphoryl-MurNAc-(pentapeptide)GlcNAc (lipid intermediate II). The chain is UDP-N-acetylglucosamine--N-acetylmuramyl-(pentapeptide) pyrophosphoryl-undecaprenol N-acetylglucosamine transferase from Lactobacillus delbrueckii subsp. bulgaricus (strain ATCC 11842 / DSM 20081 / BCRC 10696 / JCM 1002 / NBRC 13953 / NCIMB 11778 / NCTC 12712 / WDCM 00102 / Lb 14).